Consider the following 408-residue polypeptide: Ribosomal RNA large subunit methyltransferase DR_0049 (408 aa).

It belongs to the methyltransferase superfamily.

It carries out the reaction cytidine(2499) in 23S rRNA + S-adenosyl-L-methionine = 5-methylcytidine(2499) in 23S rRNA + S-adenosyl-L-homocysteine + H(+). Its function is as follows. Specifically methylates the cytosine at position 2499 (m5C2499) of 23S rRNA. The polypeptide is Ribosomal RNA large subunit methyltransferase DR_0049 (Deinococcus radiodurans (strain ATCC 13939 / DSM 20539 / JCM 16871 / CCUG 27074 / LMG 4051 / NBRC 15346 / NCIMB 9279 / VKM B-1422 / R1)).